The chain runs to 307 residues: tRNA dimethylallyltransferase (307 aa).

Residue 9 to 16 coordinates ATP; that stretch reads GPTAIGKT. 11 to 16 contributes to the substrate binding site; sequence TAIGKT. Interaction with substrate tRNA regions lie at residues 34 to 37 and 164 to 168; these read DSRQ and QRMMR.

Belongs to the IPP transferase family. As to quaternary structure, monomer. It depends on Mg(2+) as a cofactor.

It carries out the reaction adenosine(37) in tRNA + dimethylallyl diphosphate = N(6)-dimethylallyladenosine(37) in tRNA + diphosphate. Functionally, catalyzes the transfer of a dimethylallyl group onto the adenine at position 37 in tRNAs that read codons beginning with uridine, leading to the formation of N6-(dimethylallyl)adenosine (i(6)A). This is tRNA dimethylallyltransferase from Flavobacterium psychrophilum (strain ATCC 49511 / DSM 21280 / CIP 103535 / JIP02/86).